The primary structure comprises 195 residues: Imidazoleglycerol-phosphate dehydratase (195 aa).

Belongs to the imidazoleglycerol-phosphate dehydratase family.

It is found in the cytoplasm. It catalyses the reaction D-erythro-1-(imidazol-4-yl)glycerol 3-phosphate = 3-(imidazol-4-yl)-2-oxopropyl phosphate + H2O. It participates in amino-acid biosynthesis; L-histidine biosynthesis; L-histidine from 5-phospho-alpha-D-ribose 1-diphosphate: step 6/9. In Polynucleobacter asymbioticus (strain DSM 18221 / CIP 109841 / QLW-P1DMWA-1) (Polynucleobacter necessarius subsp. asymbioticus), this protein is Imidazoleglycerol-phosphate dehydratase.